The following is a 1661-amino-acid chain: MSKTKNRNSLLSSHNRTSVSNSTKDELLAMKYVMDKPAIPLYPLNELSNSSESISEQNRYTSNSSTDELTYPDFKPWKDTTHLPKGKSEVEVEKLNNEAYLNKGYFEGPSVANEYYSARNLIQASLFSSSSNCDKVLKELSQHLVNSYRTRNEVINKIKYNSNKFKIPPRVTLTASKKEAWLRDLANPDEPLSNISNKLPHGIKNKMLVDILCSKNIPTSRALWLTKCVLYSELLVLKKKYQSRLPNNPHPVENTTSETFETQWLQEWTHQLVDYFYKFSKDMCNITIQEKKQVYLTKLNYLLNYVQALYIECLLDKSFFLTSILKFLKEGLPLDQSHVSELLAFSRSEGEESSLDKWLVDIDLNYGQRLISITLVKMFWKDILELDYLSKELSELLLLNYYFIERIPTYNTKSSNYSHKQNHTAALSSTLKLKLLSSISDTVNYLFKHNTNVFIIPNYWILVNETLYKILLSDVANSYDSEEQTEIRKQLKLIKYRNESLMLSMKDVQSSNFVDVNTARNLAKDRRRSNSLQQSLSQDTKNNYNSITGKKIPNTVENDNYFINRNSDDTLNIIDQLDRLKLNDTLAEMLIPSSISSSPDNFNDWRVNLKVVIYWAITIYREQMSSSEGILIICNFLKRKVLQNISVKNVNSIKAEFENEILEIIYNLAHCTDVDIIDYNLYVLINELYQLKVITISSYLRKLIASGLFYVSPSADGAQSHNENNSSVETHLAILQNLPVLNNKQCDSILRKWTPNGFNFEEKFEKGKLILKEELVDRLMSNSFDGYCDEKLTYIKNLKVGLKFLLVNWLTNYLKTSITKSPKLIHINPNIITSLYNFYALCDNLTVFFKVLIKFILRNEGKVIICYMDSLYLISKLIIRHFKLVKFIAGKSYESTTTGYELFKLIILNYKDLSTRDNDYYNFSDVWYFIDNAVEKNEPTYGKSSDGNNDNALKHKNFNQLLFAKETVDSPMRIHANSNTPQKNNDSYTATVFRNDLDLLLEAPIKLLNNTDITDFISTLELNVSNEAFNEISNTEESVIIIMEYYFKNIGEFTELHENLCMRLLINSKRSLDMTTRGIFFDIMKHFIINLVRTKPGIEKLITLFKKLMCFEVYQPHELFSTLRSILPRELSHEQMDALKYELLFGNPESDNKNLFNDQALVLRCIRYLYVKRHSNDVFITLLDSFSNEKETFFNSYALKAYNSKVLSFFRQFSISNTKFFMDGLSKVASNSDIISFLNLLIYISEEPIGSSSDLPRLASIIDEFNLPVCQVLIKIIIMNELRDSNKDKSIEKLRYILDMLLNNLKFHFVSYNSYFGELFNYLSWEHKLNILSIFEHNFLCNTEFIVSDDKFTENSVCLMSSDGRTNLLSILKDYFKKFSVSSLNTVTTSKEVFHNLSKFLLKVLQLANADIIGDSRRDAYNTISIFLRILIIHKLSLTSMIIEQDGQDLHFIKNLIALLESKFLCFNNEKLRILLYDLLLLMKSSITSSMILNPDSNLADDMTTDTSHQQHSPSNDYLSRSNPDGTEVGNSNSKYFGVSNISTIPNLSSVFNISEPNISYPLKKYTDDSKILCALMLEESELQKGGDIYALNDSKLILLPSRREALSSAFDILNETQQTVSKKRFKIESYELLEDTGIELNNGCINLSLFDAFTTKENPP.

3 disordered regions span residues Met-1–Ser-22, Lys-524–Lys-550, and Asp-1501–Thr-1527. 3 stretches are compositionally biased toward polar residues: residues Arg-7–Ser-22, Asp-539–Thr-548, and Thr-1505–Thr-1527.

It belongs to the Mediator complex subunit 12 family. In terms of assembly, component of the SRB8-11 complex, which itself associates with the Mediator complex.

The protein localises to the nucleus. Component of the SRB8-11 complex. The SRB8-11 complex is a regulatory module of the Mediator complex which is itself involved in regulation of basal and activated RNA polymerase II-dependent transcription. The SRB8-11 complex may be involved in the transcriptional repression of a subset of genes regulated by Mediator. It may inhibit the association of the Mediator complex with RNA polymerase II to form the holoenzyme complex. This is Mediator of RNA polymerase II transcription subunit 12 (SRB8) from Debaryomyces hansenii (strain ATCC 36239 / CBS 767 / BCRC 21394 / JCM 1990 / NBRC 0083 / IGC 2968) (Yeast).